The following is a 360-amino-acid chain: Lipid-A-disaccharide synthase (360 aa).

The protein belongs to the LpxB family.

It catalyses the reaction a lipid X + a UDP-2-N,3-O-bis[(3R)-3-hydroxyacyl]-alpha-D-glucosamine = a lipid A disaccharide + UDP + H(+). Its pathway is bacterial outer membrane biogenesis; LPS lipid A biosynthesis. Functionally, condensation of UDP-2,3-diacylglucosamine and 2,3-diacylglucosamine-1-phosphate to form lipid A disaccharide, a precursor of lipid A, a phosphorylated glycolipid that anchors the lipopolysaccharide to the outer membrane of the cell. In Helicobacter pylori (strain G27), this protein is Lipid-A-disaccharide synthase.